Consider the following 367-residue polypeptide: Porin Omp2a (367 aa).

A signal peptide spans 1 to 22 (MNIKSLLLGSAAALVAASGAQA).

It belongs to the alphaproteobacteria porin family. As to quaternary structure, monomer.

It localises to the cell outer membrane. Forms passive diffusion pores that allow small molecular weight hydrophilic materials across the outer membrane. This is Porin Omp2a (omp2a) from Brucella melitensis biotype 1 (strain ATCC 23456 / CCUG 17765 / NCTC 10094 / 16M).